The chain runs to 519 residues: bZIP transcription factor 30 (519 aa).

Disordered regions lie at residues 1 to 30 (MGGG…IPKH), 45 to 83 (FRHP…QPSS), 108 to 202 (TGAG…RKPE), 222 to 295 (VLNS…TGRH), and 315 to 339 (SSLK…NSSA). Pro residues predominate over residues 51 to 61 (GAPPPPIPPIS). A compositionally biased stretch (polar residues) spans 149–173 (SDVTFGFSSMMSQNQKSPPLSSLER). A compositionally biased stretch (basic and acidic residues) spans 187-202 (VKKEPREGFYKGRKPE). Composition is skewed to low complexity over residues 244–268 (SRGS…SASG) and 317–329 (LKLP…KVSP). Polar residues predominate over residues 330–339 (TNSGEGNSSA). Positions 372–393 (KRVKRILANRVSAARSKERKTR) are basic motif. The stretch at 386-460 (RSKERKTRYM…SEKLNEEVQR (75 aa)) forms a coiled coil. The tract at residues 398–433 (LEHKVQTLQTEATTLSAQLTHLQRDSMGLTNQNSEL) is leucine-zipper. Residues 465 to 519 (IGEPNRRQSGSSSSESKMSLNPEMFQQLSISQLQHQQMQHSNQCSTMKAKHTSND) form a disordered region. Composition is skewed to low complexity over residues 473-483 (SGSSSSESKMS) and 490-509 (QQLS…NQCS).

In terms of assembly, interacts with WUS, HEC1, KNAT1, KNAT2, HAT1, BEL1, and NGA1. Expressed in inflorescence meristem, floral organ primordia, gynoecia, ovules and carpel margin meristem.

It is found in the nucleus. In terms of biological role, transcription factor that acts as a repressor of reproductive development, meristem size and plant growth. Acts as a transcriptional repressor in inflorescence tissues. Interacts with well known regulators of meristem and gynoecium development such as WUS, HEC1, KNAT1, KNAT2, HAT1, BEL1 and NGA1. Acts as a positive regulator of JAG and OFP1 expression in developing gynoecia. In Arabidopsis thaliana (Mouse-ear cress), this protein is bZIP transcription factor 30.